A 294-amino-acid chain; its full sequence is Cytidine deaminase (294 aa).

2 consecutive CMP/dCMP-type deaminase domains span residues 48 to 168 (DDDA…FGPR) and 186 to 294 (LKGD…VTLA). 89–91 (NME) contacts substrate. Residue H102 participates in Zn(2+) binding. E104 (proton donor) is an active-site residue. Zn(2+) is bound by residues C129 and C132.

The protein belongs to the cytidine and deoxycytidylate deaminase family. As to quaternary structure, homodimer. The cofactor is Zn(2+).

The catalysed reaction is cytidine + H2O + H(+) = uridine + NH4(+). The enzyme catalyses 2'-deoxycytidine + H2O + H(+) = 2'-deoxyuridine + NH4(+). In terms of biological role, this enzyme scavenges exogenous and endogenous cytidine and 2'-deoxycytidine for UMP synthesis. The protein is Cytidine deaminase of Cronobacter sakazakii (strain ATCC BAA-894) (Enterobacter sakazakii).